The sequence spans 689 residues: Transcription factor MYC2 (689 aa).

Positions 94–172 are JAZ-interaction domain; that stretch reads LQQRLQALID…VLRELNSLIS (79 aa). The segment covering 316–349 has biased composition (polar residues); the sequence is NTVQTNSVPSSNSNKQIAYGNENNHPSGNGQSCY. Disordered stretches follow at residues 316 to 361 and 420 to 519; these read NTVQ…PQQQ and QSQF…EAER. The segment covering 350-361 has biased composition (low complexity); it reads NQQQQKNPPQQQ. Over residues 471–495 the composition is skewed to basic and acidic residues; it reads DSEHSDLEASVVKEADSSRVVEPEK. The span at 496–505 shows a compositional bias: basic residues; that stretch reads RPRKRGRKPA. The segment covering 506 to 519 has biased composition (basic and acidic residues); it reads NGREEPLNHVEAER. Residues 509–522 are basic motif; degenerate; the sequence is EEPLNHVEAERQRR. The bHLH domain maps to 509-558; it reads EEPLNHVEAERQRREKLNQRFYALRAVVPNVSKMDKASLLGDAISYINEL. The helix-loop-helix motif stretch occupies residues 523–558; it reads EKLNQRFYALRAVVPNVSKMDKASLLGDAISYINEL. Positions 563–602 are disordered; it reads QNTESDKEDLKSQIEDLKKESRRPGPPPPPNQDLKMSSHT. Residues 566–585 show a composition bias toward basic and acidic residues; it reads ESDKEDLKSQIEDLKKESRR.

In terms of assembly, interacts (via N-terminus) with MED25. Interacts (via N-terminus) with JAZ7. MED25 and JAZ7 compete with each other to bind to MYC2. Interacts (via N-terminus) with MTB1. MTB1 and MED25 compete with each other to bind to MYC2. As to expression, expressed at low levels in roots, stems, leaves, flowers and fruits.

The protein localises to the nucleus. Transcriptional activator that binds to the G-box motif (5'-AACGTG-3') found in the promoter of the jasmonate-induced gene LAPA1. Acts as a negative regulator of blue light-mediated photomorphogenesis and positively regulates root growth. Promotes growth in response to the phytohormones abscisic acid (ABA) and jasmonate (JA). Binds to the G-box motif (5'-CACGTG-3') of the RBCS-3A gene promoter. Acts downstream of the jasmonate (JA) receptor to orchestrate JA-mediated activation of plant responses. Positively regulates both wound-responsive and pathogen-responsive genes through MYC2-targeted transcription factors (MTFs) involved in early response to JA. With JA2L forms a transcription module that regulates wounding-responsive genes. With ERF.C3 forms a transcription module that regulates pathogen-responsive genes. Plays a critical role in orchestrating JA-mediated defense gene expression during Botrytis cinerea infection. Negatively regulates defense responses to root-knot nematodes, potentially by mediating crosstalk among the hormones strigolactones, abscisic acid (ABA) and jasmonate (JA). Regulates the termination of JA-mediated defense responses by specifically binding the G-box (5'-CACATG-3') motifs in the promoters of MTB1, MTB2 and MTB3, which are transcription factors that negatively regulates JA signaling. May be involved in JA-induced chilling tolerance, possibly by ameliorating the antioxidant enzyme system of fruit and increasing proline and lycopene levels. The chain is Transcription factor MYC2 from Solanum lycopersicum (Tomato).